Reading from the N-terminus, the 180-residue chain is Large ribosomal subunit protein uL6 (180 aa).

It belongs to the universal ribosomal protein uL6 family. As to quaternary structure, part of the 50S ribosomal subunit.

In terms of biological role, this protein binds to the 23S rRNA, and is important in its secondary structure. It is located near the subunit interface in the base of the L7/L12 stalk, and near the tRNA binding site of the peptidyltransferase center. The sequence is that of Large ribosomal subunit protein uL6 from Mesoplasma florum (strain ATCC 33453 / NBRC 100688 / NCTC 11704 / L1) (Acholeplasma florum).